The following is a 344-amino-acid chain: 2,3,4,5-tetrahydropyridine-2,6-dicarboxylate N-succinyltransferase (344 aa).

Glu205 lines the Mg(2+) pocket. Glu221 serves as the catalytic Acyl-anhydride intermediate. Succinyl-CoA is bound by residues Arg223, Gly238, Ser241, Ala264, 279–280, 287–289, Lys304, and 317–320; these read EA, GTK, and RRNS.

The protein belongs to the type 2 tetrahydrodipicolinate N-succinyltransferase family. Homotrimer. It depends on Magnesium ions are not essential for catalysis. as a cofactor.

It is found in the cytoplasm. The catalysed reaction is (S)-2,3,4,5-tetrahydrodipicolinate + succinyl-CoA + H2O = (S)-2-succinylamino-6-oxoheptanedioate + CoA. It functions in the pathway amino-acid biosynthesis; L-lysine biosynthesis via DAP pathway; LL-2,6-diaminopimelate from (S)-tetrahydrodipicolinate (succinylase route): step 1/3. Its activity is regulated as follows. Weakly inhibited by D-2-aminopimelate. Catalyzes the conversion of the cyclic tetrahydrodipicolinate (THDP) into the acyclic N-succinyl-L-2-amino-6-oxopimelate using succinyl-CoA. Displays succinyl transferase activity with L-2-aminopimelate and succinyl-CoA as substrates. The chain is 2,3,4,5-tetrahydropyridine-2,6-dicarboxylate N-succinyltransferase from Pseudomonas aeruginosa (strain ATCC 15692 / DSM 22644 / CIP 104116 / JCM 14847 / LMG 12228 / 1C / PRS 101 / PAO1).